A 1081-amino-acid chain; its full sequence is MTIFDAVAKAIVPSVTHAIEENNKNREIQEKRQKETKDRNDRMVQNQKDRKEMIGLTNEKQTYSNSVKNAKTDNEKKIFQNLLDKTNSRITDIEKRQSGDISEYKRLVEENKNLEKNVKEFKEVMKPFEENDIIHNPKHVDEDTIEENKKKMEDIKEVLGFTKTAANGGLPPNHDEDNKKIAELKKKYDDVKNHGHSNSGGLVGSVFNAIVPSVKENLRNAELENIQKEIKQTEDKISNDDKFYNTYKLTDDERKQFGSNPGDPQATPTPTPTPTPTPTPTPTPTTTTTTTTTPKPTTTTTTTSTTTPTKTSTNTNDKPGIFETVGGGSGKVADALNPIRIVTGGAIFSDTMEKIGGGSGKLADEGVEAVGSGISNFAQSVGIIPKKQEPKKDENNNQSNNNNNNNQAGDDQNKNQNRDENNQGGENNQGGENNQDGENNQNGDENNQGGENNQGDENNQGGENNQGDQNNQDGGENNQDGGENNQDGHGNNQDGENNQDGGENNQDSGENNQDGGENNQDGGENNQDGGENNQDGGENNQDGGENNQDGGENNQDGENNQDGENNQENNRDGENNQDGGENNQDGGENNQDGENNQDGGENNQDDGENKQDGGENNQDGGENNQDDGENNQDGENNQDGGENNQDGDENNQDSGENNQDSGENNQDGGENNQDGDENNQDGGENNQDGENNQNGENNQDGGENNQDGENNQDGENNQDGGENNQDGGENNQDGGEDNQDGGENNQEGGEDNQDGGEDNQDGGEDNQDGGENNQGDENNQDVDENNQDGENNQDGDENNQDGENNQDGENNQDGDENNNQDGEQNQDGDENNQDGGENNQDGDENNNQDGDENNNQDGGENNQDGGENNQDGDENNNQDGGENNQDGENNQDGDENNNQDGEQNQDGDENNQEGDENNNQGDDENNNQDGDENNNQDGDENNQDGDENNQDGDENNQGNDENNQDGDQNNQGGDENNQDGDGENNQGDENNQDGGENNQDGGENNQDQDGSENNQGNNENNQGGDENNQDQDGGENNQGNDENNQGGDENNQGNENDQGGDENNQGGDENTNQEENGGNDE.

Coiled coils occupy residues Ala-18 to Asn-131 and Asn-173 to Lys-242. Basic and acidic residues predominate over residues Asn-22 to Met-53. The tract at residues Asn-22–Lys-60 is disordered. Disordered regions lie at residues Thr-250–Ile-321 and Gln-388–Glu-1081. Residues Thr-267 to Thr-283 show a composition bias toward pro residues. Composition is skewed to low complexity over residues Pro-284–Thr-313 and Asn-396–Asp-410. A compositionally biased stretch (basic and acidic residues) spans Asp-411–Asn-421. Composition is skewed to low complexity over residues Asn-422 to Glu-568, Asn-576 to Asn-602, Gly-614 to Asn-623, Asp-633 to Asn-644, Gly-662 to Asn-672, and Gln-680 to Asp-733. 3 stretches are compositionally biased toward acidic residues: residues Gly-748 to Asp-768, Asn-778 to Asn-832, and Gln-840 to Asn-854. Low complexity-rich tracts occupy residues Asn-855–Asn-869 and Asn-877–Glu-888. Acidic residues predominate over residues Asn-889 to Glu-954. Composition is skewed to low complexity over residues Asn-955–Glu-975, Glu-983–Glu-1026, and Gly-1034–Glu-1081.

This is an uncharacterized protein from Dictyostelium discoideum (Social amoeba).